Here is a 139-residue protein sequence, read N- to C-terminus: Small ribosomal subunit protein uS12 (139 aa).

The disordered stretch occupies residues 12-55 (RVDKVKKSDSPALNKGYNSFKKSQTDVSSPQKRGVCTRVGTMTP). Residues 27–42 (GYNSFKKSQTDVSSPQ) show a composition bias toward polar residues. Aspartate 102 bears the 3-methylthioaspartic acid mark. Residues 119 to 139 (GVQNRMQGRSKYGTKKPKDKK) form a disordered region. A compositionally biased stretch (basic residues) spans 130-139 (YGTKKPKDKK).

Belongs to the universal ribosomal protein uS12 family. As to quaternary structure, part of the 30S ribosomal subunit. Contacts proteins S8 and S17. May interact with IF1 in the 30S initiation complex.

In terms of biological role, with S4 and S5 plays an important role in translational accuracy. Its function is as follows. Interacts with and stabilizes bases of the 16S rRNA that are involved in tRNA selection in the A site and with the mRNA backbone. Located at the interface of the 30S and 50S subunits, it traverses the body of the 30S subunit contacting proteins on the other side and probably holding the rRNA structure together. The combined cluster of proteins S8, S12 and S17 appears to hold together the shoulder and platform of the 30S subunit. This is Small ribosomal subunit protein uS12 from Shouchella clausii (strain KSM-K16) (Alkalihalobacillus clausii).